We begin with the raw amino-acid sequence, 525 residues long: ATP synthase subunit alpha (525 aa).

169–176 (GDRQTGKT) is a binding site for ATP.

The protein belongs to the ATPase alpha/beta chains family. In terms of assembly, F-type ATPases have 2 components, CF(1) - the catalytic core - and CF(0) - the membrane proton channel. CF(1) has five subunits: alpha(3), beta(3), gamma(1), delta(1), epsilon(1). CF(0) has three main subunits: a(1), b(2) and c(9-12). The alpha and beta chains form an alternating ring which encloses part of the gamma chain. CF(1) is attached to CF(0) by a central stalk formed by the gamma and epsilon chains, while a peripheral stalk is formed by the delta and b chains.

Its subcellular location is the cell membrane. The enzyme catalyses ATP + H2O + 4 H(+)(in) = ADP + phosphate + 5 H(+)(out). Produces ATP from ADP in the presence of a proton gradient across the membrane. The alpha chain is a regulatory subunit. This is ATP synthase subunit alpha from Mesoplasma florum (strain ATCC 33453 / NBRC 100688 / NCTC 11704 / L1) (Acholeplasma florum).